The primary structure comprises 1321 residues: Lysine-specific demethylase 3A (1321 aa).

S264 and S325 each carry phosphoserine. 3 disordered regions span residues 307 to 336 (ATPPSKDPRQQSTPQAANSPPNLGAKIPQG), 383 to 402 (LTEPKGSCTQPKTNTDQENR), and 438 to 472 (KHLEHAPSPSDVSNAPEVKAGVNSDSPNNCSGKKV). A compositionally biased stretch (polar residues) spans 316-327 (QQSTPQAANSPP). Residue S445 is modified to Phosphoserine. The C6-type zinc-finger motif lies at 662–687 (CDVCDTTIFNLHWVCPRCGFGVCVDC). Phosphoserine is present on S766. An LXXLL motif motif is present at residues 885 to 889 (LRNLL). K895 bears the N6-acetyllysine mark. Positions 1058 to 1281 (MPSRFDDLMA…HCFWLTQEFR (224 aa)) constitute a JmjC domain. Fe cation is bound by residues H1120, D1122, and H1249.

It belongs to the JHDM2 histone demethylase family. In terms of assembly, interacts with VRK1. Fe(2+) is required as a cofactor.

It localises to the cytoplasm. The protein resides in the nucleus. The catalysed reaction is N(6),N(6)-dimethyl-L-lysyl(9)-[histone H3] + 2 2-oxoglutarate + 2 O2 = L-lysyl(9)-[histone H3] + 2 formaldehyde + 2 succinate + 2 CO2. Its function is as follows. Histone demethylase that specifically demethylates 'Lys-9' of histone H3, thereby playing a central role in histone code. Preferentially demethylates mono- and dimethylated H3 'Lys-9' residue, with a preference for dimethylated residue, while it has weak or no activity on trimethylated H3 'Lys-9'. Demethylation of Lys residue generates formaldehyde and succinate. Involved in hormone-dependent transcriptional activation, by participating in recruitment to androgen-receptor target genes, resulting in H3 'Lys-9' demethylation and transcriptional activation. Involved in spermatogenesis by regulating expression of target genes such as PRM1 and TNP1 which are required for packaging and condensation of sperm chromatin. Involved in obesity resistance through regulation of metabolic genes such as PPARA and UCP1. In Homo sapiens (Human), this protein is Lysine-specific demethylase 3A (KDM3A).